The sequence spans 86 residues: Cell division topological specificity factor (86 aa).

It belongs to the MinE family.

Its function is as follows. Prevents the cell division inhibition by proteins MinC and MinD at internal division sites while permitting inhibition at polar sites. This ensures cell division at the proper site by restricting the formation of a division septum at the midpoint of the long axis of the cell. The polypeptide is Cell division topological specificity factor (Shewanella halifaxensis (strain HAW-EB4)).